The chain runs to 760 residues: General transcription and DNA repair factor IIH helicase subunit XPD (760 aa).

The 277-residue stretch at 7–283 folds into the Helicase ATP-binding domain; it reads GLLVYFPYDY…KETDEQRLRD (277 aa). ATP is bound at residue 42 to 49; sequence MPSGTGKT. 4 residues coordinate [4Fe-4S] cluster: Cys-116, Cys-134, Cys-155, and Cys-190. The short motif at 234–237 is the DEAH box element; sequence DEAH. The segment at 438-637 is mediates interaction with MMS19; that stretch reads MDASLAIKPV…TQSRILKARL (200 aa). A Nuclear localization signal motif is present at residues 682 to 695; it reads KRFARADKRGKLPR.

The protein belongs to the helicase family. RAD3/XPD subfamily. In terms of assembly, component of the 7-subunit TFIIH core complex composed of XPB/ERCC3, XPD/ERCC2, GTF2H1, GTF2H2, GTF2H3, GTF2H4 and GTF2H5, which is active in NER. The core complex associates with the 3-subunit CDK-activating kinase (CAK) module composed of CCNH/cyclin H, CDK7 and MNAT1 to form the 10-subunit holoenzyme (holo-TFIIH) active in transcription. The interaction with GTF2H2 results in the stimulation of the 5'--&gt;3' helicase activity. Component of the MMXD complex, which includes CIAO1, ERCC2, CIAO2B, MMS19 and SLC25A5. Interacts with CIAO1 and CIAO2B; the interaction WITH CIAO2B is direct. Interacts with ATF7IP. Interacts directly with MMS19. Part of TBP-based Pol II pre-initiation complex (PIC), in which Pol II core assembles with general transcription factors and other specific initiation factors including GTF2E1, GTF2E2, GTF2F1, GTF2F2, TCEA1, ERCC2, ERCC3, GTF2H2, GTF2H3, GTF2H4, GTF2H5, GTF2A1, GTF2A2, GTF2B and TBP; this large multi-subunit PIC complex mediates DNA unwinding and targets Pol II core to the transcription start site where the first phosphodiester bond forms. The cofactor is Mg(2+). [4Fe-4S] cluster is required as a cofactor. Post-translationally, ISGylated.

It is found in the nucleus. The protein localises to the cytoplasm. Its subcellular location is the cytoskeleton. The protein resides in the spindle. The catalysed reaction is Couples ATP hydrolysis with the unwinding of duplex DNA at the replication fork by translocating in the 5'-3' direction. This creates two antiparallel DNA single strands (ssDNA). The leading ssDNA polymer is the template for DNA polymerase III holoenzyme which synthesizes a continuous strand.. It carries out the reaction ATP + H2O = ADP + phosphate + H(+). ATP-dependent 5'-3' DNA helicase. Component of the general transcription and DNA repair factor IIH (TFIIH) core complex which is involved in general and transcription-coupled nucleotide excision repair (NER) of damaged DNA. When complexed to CDK-activating kinase (CAK), involved in transcription by RNA polymerase II. In NER, TFIIH acts by opening DNA around the lesion to allow the excision of the damaged oligonucleotide and its replacement by a new DNA fragment. The ATP-dependent helicase activity of XPD/ERCC2 is required for DNA opening. In transcription, TFIIH has an essential role in transcription initiation. When the pre-initiation complex (PIC) has been established, TFIIH is required for promoter opening and promoter escape. Phosphorylation of the C-terminal tail (CTD) of the largest subunit of RNA polymerase II by the kinase module CAK controls the initiation of transcription. XPD/ERCC2 acts by forming a bridge between CAK and the core-TFIIH complex. Involved in the regulation of vitamin-D receptor activity. As part of the mitotic spindle-associated MMXD complex it plays a role in chromosome segregation. Might have a role in aging process and could play a causative role in the generation of skin cancers. The polypeptide is General transcription and DNA repair factor IIH helicase subunit XPD (Cricetulus griseus (Chinese hamster)).